Here is a 376-residue protein sequence, read N- to C-terminus: Chaperone protein DnaJ (376 aa).

The J domain occupies 5-70; it reads DYYEILGVSK…QKRAAYDQYG (66 aa). Residues 131 to 209 form a CR-type zinc finger; that stretch reads GVTKEIRIPT…CHGHGRVERS (79 aa). Residues C144, C147, C161, C164, C183, C186, C197, and C200 each contribute to the Zn(2+) site. CXXCXGXG motif repeat units follow at residues 144–151, 161–168, 183–190, and 197–204; these read CDVCHGSG, CPTCHGSG, CPHCQGRG, and CNKCHGHG.

Belongs to the DnaJ family. As to quaternary structure, homodimer. Requires Zn(2+) as cofactor.

Its subcellular location is the cytoplasm. Functionally, participates actively in the response to hyperosmotic and heat shock by preventing the aggregation of stress-denatured proteins and by disaggregating proteins, also in an autonomous, DnaK-independent fashion. Unfolded proteins bind initially to DnaJ; upon interaction with the DnaJ-bound protein, DnaK hydrolyzes its bound ATP, resulting in the formation of a stable complex. GrpE releases ADP from DnaK; ATP binding to DnaK triggers the release of the substrate protein, thus completing the reaction cycle. Several rounds of ATP-dependent interactions between DnaJ, DnaK and GrpE are required for fully efficient folding. Also involved, together with DnaK and GrpE, in the DNA replication of plasmids through activation of initiation proteins. The chain is Chaperone protein DnaJ from Shigella boydii serotype 18 (strain CDC 3083-94 / BS512).